A 317-amino-acid polypeptide reads, in one-letter code: Transcription cofactor vestigial-like protein 2 (317 aa).

4 disordered regions span residues 41–76 (CNAS…ERPP), 108–128 (SQPS…SSGP), 191–214 (TEPW…GGAL), and 253–293 (RLAT…PSGD). Over residues 44–57 (SPSSSGSGSSSFSS) the composition is skewed to low complexity. Over residues 63-76 (IKEEEGSPEKERPP) the composition is skewed to basic and acidic residues. Over residues 108-120 (SQPSSYSPSCTSS) the composition is skewed to low complexity. Residues 196–206 (HAHPHHAHPHH) are compositionally biased toward basic residues. A compositionally biased stretch (low complexity) spans 272 to 292 (KGEPAGAAWAGPGGPFASPSG).

The protein belongs to the vestigial family. In terms of assembly, interacts with TEFs. Binds to TEAD1/TEF1. As to expression, skeletal muscle.

It is found in the nucleus. Its function is as follows. May act as a specific coactivator for the mammalian TEFs. May play a role in the development of skeletal muscles. The polypeptide is Transcription cofactor vestigial-like protein 2 (VGLL2) (Homo sapiens (Human)).